The primary structure comprises 322 residues: Labrum-interacting protein from saliva LIPS-2 (322 aa).

The first 20 residues, 1-20 (MKTSLPIVVLLTAVISGVHP), serve as a signal peptide directing secretion. The cysteines at positions 27 and 62 are disulfide-linked. Asparagine 168 and asparagine 175 each carry an N-linked (GlcNAc...) asparagine glycan. Cysteine 249 and cysteine 295 are disulfide-bonded.

Monomer in solution. Interacts (via the N-terminal domain) with cuticular protein Cp19 (via the C-terminus). In terms of processing, proteolytically cleaved by human mast cell tryptase and chymase. Post-translationally, glycosylated. As to expression, female salivary gland (at protein level). Female saliva (at protein level).

It is found in the secreted. In terms of biological role, salivary protein that promotes mosquito blood feeding on the vertebrate host by inducing morphological changes in the mosquito labrum. Interacts with the mosquito labrum end tip and triggers salivation and probing. Modulates enzymatic activities of human tryptase and chymase. The polypeptide is Labrum-interacting protein from saliva LIPS-2 (Aedes albopictus (Asian tiger mosquito)).